We begin with the raw amino-acid sequence, 313 residues long: Intelectin-like protein (313 aa).

The 219-residue stretch at 33–251 (TSCCSQTSPG…NNEKAPMALC (219 aa)) folds into the Fibrinogen C-terminal domain. Ca(2+) contacts are provided by histidine 86, glutamate 87, asparagine 89, glycine 92, glycine 97, aspartate 98, and aspartate 133. 3 disulfides stabilise this stretch: cysteine 94/cysteine 280, cysteine 199/cysteine 259, and cysteine 251/cysteine 265. Positions 260, 262, 274, and 282 each coordinate Ca(2+). A carbohydrate contacts are provided by residues 262-263 (EH) and glutamate 274.

As to quaternary structure, monomer, homodimer, homotrimer and homotetramer. Mostly monomeric or dimeric.

It is found in the secreted. Its function is as follows. Binds mannan, mannose and, to a lesser degree, D-lactose, N-acetylgalactosamine, N-acetylglucosamine and beta-D-glucose. In Alligator mississippiensis (American alligator), this protein is Intelectin-like protein.